The primary structure comprises 384 residues: Protein Brevis radix-like 4 (384 aa).

Disordered regions lie at residues 1–35 (MLTCIARSKRAGDESSGQPDDPDSKNAKSLTSQLK) and 50–78 (PCTAAQGQGQGQGPIKNNPSSSSVKSDFE). One can recognise a BRX 1 domain in the interval 150–205 (KEWVAQVEPGVLITFVSLPGGGNDLKRIRFSRDMFNKLQAQRWWADNYDKVMELYN). Disordered regions lie at residues 214-270 (FPLP…DHNS) and 304-325 (SIRSSSSRDADRSEEMSVSNAS). Basic and acidic residues predominate over residues 221 to 235 (RSEDENAKVEYHPED). The segment covering 260–270 (YSSSDSLDHNS) has biased composition (polar residues). Residues 309 to 318 (SSRDADRSEE) are compositionally biased toward basic and acidic residues. One can recognise a BRX 2 domain in the interval 329-384 (NEWVEQDEPGVYITIKVLPGGKRELRRVRFSRERFGEMHARLWWEENRARIHEQYL).

It belongs to the BRX family. In terms of tissue distribution, expressed in roots.

It localises to the nucleus. The protein is Protein Brevis radix-like 4 (BRXL4) of Arabidopsis thaliana (Mouse-ear cress).